The sequence spans 447 residues: N-succinylarginine dihydrolase (447 aa).

Residues 19-28, N110, and 137-138 contribute to the substrate site; these read AGLSFGNEAS and HR. E174 is a catalytic residue. Position 213 (R213) interacts with substrate. H249 is an active-site residue. Residues D251 and N364 each contribute to the substrate site. C370 acts as the Nucleophile in catalysis.

It belongs to the succinylarginine dihydrolase family. Homodimer.

The enzyme catalyses N(2)-succinyl-L-arginine + 2 H2O + 2 H(+) = N(2)-succinyl-L-ornithine + 2 NH4(+) + CO2. Its pathway is amino-acid degradation; L-arginine degradation via AST pathway; L-glutamate and succinate from L-arginine: step 2/5. Functionally, catalyzes the hydrolysis of N(2)-succinylarginine into N(2)-succinylornithine, ammonia and CO(2). In Yersinia enterocolitica serotype O:8 / biotype 1B (strain NCTC 13174 / 8081), this protein is N-succinylarginine dihydrolase.